We begin with the raw amino-acid sequence, 338 residues long: MQQSLITKWLSISCIMVIAMIVIGGITRLTGSGLSIVEWRPITGILPPLSFEAWQVEFAKYKAFPEYNYVNYRMTLSQFKFIYLLEFIHRLLGRITALIYIVPLIYFYFKGIIKNRDIAPYIIALLLLYVQGFMGWYMVKSGLLNNPSVSHLRLAFHLIIAVIIYHILFYQLIKNRCDILLILSQTDLKLPLRFSSVAITVIYLQIFLGALVAGLDAGLIYNSFPLMGDNFIPTAIKDNFFDLKNWYDPVFIQCIHRLGGYSVFLVVMALATYLLKIEHPKLNKIAYFLIIALLMQISTGIITLLYSVPIIIASTHQFFAIVLLSVIIWCYFLIKTSK.

Helical transmembrane passes span 6–26, 93–113, 118–138, 154–174, and 201–221; these read ITKW…IGGI, GRIT…KGII, IAPY…GWYM, LAFH…QLIK, and VIYL…GLIY. His-256 contributes to the heme binding site. 3 helical membrane-spanning segments follow: residues 258–278, 285–305, and 308–328; these read LGGY…LKIE, IAYF…ITLL, and VPII…SVII. His-316 provides a ligand contact to heme.

Belongs to the COX15/CtaA family. Type 2 subfamily. Interacts with CtaB. The cofactor is heme b.

It localises to the cell membrane. It catalyses the reaction Fe(II)-heme o + 2 A + H2O = Fe(II)-heme a + 2 AH2. The protein operates within porphyrin-containing compound metabolism; heme A biosynthesis; heme A from heme O: step 1/1. In terms of biological role, catalyzes the conversion of heme O to heme A by two successive hydroxylations of the methyl group at C8. The first hydroxylation forms heme I, the second hydroxylation results in an unstable dihydroxymethyl group, which spontaneously dehydrates, resulting in the formyl group of heme A. The sequence is that of Heme A synthase from Rickettsia canadensis (strain McKiel).